A 1819-amino-acid chain; its full sequence is U3 small nucleolar RNA-associated protein 10 (1819 aa).

One copy of the HEAT repeat lies at 1779–1817; that stretch reads LIPYIAELLEDDDEDVELEVRKGLVKVLENVLGEPLDRY.

Belongs to the HEATR1/UTP10 family. Component of the ribosomal small subunit (SSU) processome.

The protein resides in the nucleus. It is found in the nucleolus. Its function is as follows. Involved in nucleolar processing of pre-18S ribosomal RNA. Involved in ribosome biosynthesis. The protein is U3 small nucleolar RNA-associated protein 10 of Meyerozyma guilliermondii (strain ATCC 6260 / CBS 566 / DSM 6381 / JCM 1539 / NBRC 10279 / NRRL Y-324) (Yeast).